Here is a 173-residue protein sequence, read N- to C-terminus: Acireductone dioxygenase (173 aa).

Positions 1 to 21 (MKFYYHDNDSSVDQCAPHDSG) are disordered. Fe(2+)-binding residues include H84, H86, E90, and H129. Residues H84, H86, E90, and H129 each contribute to the Ni(2+) site.

The protein belongs to the acireductone dioxygenase (ARD) family. Fe(2+) is required as a cofactor. It depends on Ni(2+) as a cofactor.

The protein resides in the cytoplasm. The protein localises to the nucleus. The enzyme catalyses 1,2-dihydroxy-5-(methylsulfanyl)pent-1-en-3-one + O2 = 4-methylsulfanyl-2-oxobutanoate + formate + 2 H(+). It catalyses the reaction 1,2-dihydroxy-5-(methylsulfanyl)pent-1-en-3-one + O2 = 3-(methylsulfanyl)propanoate + CO + formate + 2 H(+). It functions in the pathway amino-acid biosynthesis; L-methionine biosynthesis via salvage pathway; L-methionine from S-methyl-5-thio-alpha-D-ribose 1-phosphate: step 5/6. In terms of biological role, catalyzes 2 different reactions between oxygen and the acireductone 1,2-dihydroxy-3-keto-5-methylthiopentene (DHK-MTPene) depending upon the metal bound in the active site. Fe-containing acireductone dioxygenase (Fe-ARD) produces formate and 2-keto-4-methylthiobutyrate (KMTB), the alpha-ketoacid precursor of methionine in the methionine recycle pathway. Ni-containing acireductone dioxygenase (Ni-ARD) produces methylthiopropionate, carbon monoxide and formate, and does not lie on the methionine recycle pathway. In Yarrowia lipolytica (strain CLIB 122 / E 150) (Yeast), this protein is Acireductone dioxygenase.